A 438-amino-acid chain; its full sequence is sn-glycerol-3-phosphate-binding periplasmic protein UgpB (438 aa).

The first 23 residues, 1-23 (MKPLHYTASALALGLALMGNAQA), serve as a signal peptide directing secretion. Tyrosine 65, glutamate 89, serine 144, serine 270, glycine 307, tyrosine 346, and arginine 397 together coordinate sn-glycerol 3-phosphate.

It belongs to the bacterial solute-binding protein 1 family. As to quaternary structure, the complex is composed of two ATP-binding proteins (UgpC), two transmembrane proteins (UgpA and UgpE) and a solute-binding protein (UgpB).

The protein localises to the periplasm. Part of the ABC transporter complex UgpBAEC involved in sn-glycerol-3-phosphate (G3P) import. Binds G3P. This chain is sn-glycerol-3-phosphate-binding periplasmic protein UgpB (ugpB), found in Escherichia coli O157:H7.